Reading from the N-terminus, the 247-residue chain is MWPLLTMHITQLNRECLLHLFSFLDKDSRKSLARTCSQLHDVFEDPALWSLLHFRSLTELQKDNFLLGPALRSLSICWHSSRVQVCSIEDWLKSAFQRSICSRHESLVNDFLLRVCDRLSAVRSPRRREAPAPSSGTPIAVGPKSPRWGGPDHSEFADLRSGVTGARAAARRGLGSLRAERPSETPPAPGVSWGPPPPGAPVVISVKQEEGKQGRTGRRSHRAAPPCGFARTRVCPPTFPGADAFPQ.

Residues 6–52 (TMHITQLNRECLLHLFSFLDKDSRKSLARTCSQLHDVFEDPALWSLL) form the F-box domain. 2 disordered regions span residues 124-154 (SPRR…PDHS) and 173-247 (GLGS…AFPQ). Residues 184–200 (ETPPAPGVSWGPPPPGA) show a composition bias toward pro residues.

Directly interacts with SKP1 and CUL1. Enriched in cardiac muscle.

The protein resides in the cytoplasm. It localises to the myofibril. Its subcellular location is the sarcomere. The protein localises to the z line. It participates in protein modification; protein ubiquitination. Functionally, substrate-recognition component of the SCF (SKP1-CUL1-F-box protein)-type E3 ubiquitin ligase complex. Promotes ubiquitination of sarcomeric proteins alpha-actinin-2 (ACTN2) and filamin-C (FLNC). The chain is F-box and leucine-rich protein 22 (FBXL22) from Homo sapiens (Human).